Consider the following 487-residue polypeptide: Betaine aldehyde dehydrogenase (487 aa).

Ser-26, Ile-27, and Asp-93 together coordinate K(+). 150 to 152 (GAW) lines the NAD(+) pocket. Lys-162 (charge relay system) is an active-site residue. NAD(+) is bound by residues 176–179 (KPSE) and 229–232 (SVPT). Leu-244 lines the K(+) pocket. The active-site Proton acceptor is Glu-250. Positions 252, 284, and 384 each coordinate NAD(+). The active-site Nucleophile is Cys-284. A Cysteine sulfenic acid (-SOH) modification is found at Cys-284. Positions 454 and 457 each coordinate K(+). Glu-461 (charge relay system) is an active-site residue.

This sequence belongs to the aldehyde dehydrogenase family. Dimer of dimers. Requires K(+) as cofactor.

It carries out the reaction betaine aldehyde + NAD(+) + H2O = glycine betaine + NADH + 2 H(+). The protein operates within amine and polyamine biosynthesis; betaine biosynthesis via choline pathway; betaine from betaine aldehyde: step 1/1. Its function is as follows. Involved in the biosynthesis of the osmoprotectant glycine betaine. Catalyzes the irreversible oxidation of betaine aldehyde to the corresponding acid. The protein is Betaine aldehyde dehydrogenase of Sinorhizobium fredii (strain NBRC 101917 / NGR234).